The following is a 388-amino-acid chain: Pepsin A-3 (388 aa).

The first 15 residues, 1-15, serve as a signal peptide directing secretion; sequence MKWLLLLGLVALSEC. Residues 16–62 constitute a propeptide, activation peptide; the sequence is IMYKVPLIRKKSLRRTLSERGLLKDFLKKHNLNPARKYFPQWKAPTL. Residues 76–385 enclose the Peptidase A1 domain; sequence YFGTIGIGTP…DRANNQVGLA (310 aa). Aspartate 94 is an active-site residue. 2 disulfides stabilise this stretch: cysteine 107-cysteine 112 and cysteine 268-cysteine 272. Aspartate 277 is a catalytic residue. A disulfide bridge connects residues cysteine 311 and cysteine 344.

The protein belongs to the peptidase A1 family.

The protein localises to the secreted. The enzyme catalyses Preferential cleavage: hydrophobic, preferably aromatic, residues in P1 and P1' positions. Cleaves 1-Phe-|-Val-2, 4-Gln-|-His-5, 13-Glu-|-Ala-14, 14-Ala-|-Leu-15, 15-Leu-|-Tyr-16, 16-Tyr-|-Leu-17, 23-Gly-|-Phe-24, 24-Phe-|-Phe-25 and 25-Phe-|-Tyr-26 bonds in the B chain of insulin.. Functionally, shows particularly broad specificity; although bonds involving phenylalanine and leucine are preferred, many others are also cleaved to some extent. The sequence is that of Pepsin A-3 (PGA3) from Homo sapiens (Human).